The chain runs to 179 residues: Large ribosomal subunit protein uL5 (179 aa).

This sequence belongs to the universal ribosomal protein uL5 family. Part of the 50S ribosomal subunit; part of the 5S rRNA/L5/L18/L25 subcomplex. Contacts the 5S rRNA and the P site tRNA. Forms a bridge to the 30S subunit in the 70S ribosome.

Its function is as follows. This is one of the proteins that bind and probably mediate the attachment of the 5S RNA into the large ribosomal subunit, where it forms part of the central protuberance. In the 70S ribosome it contacts protein S13 of the 30S subunit (bridge B1b), connecting the 2 subunits; this bridge is implicated in subunit movement. Contacts the P site tRNA; the 5S rRNA and some of its associated proteins might help stabilize positioning of ribosome-bound tRNAs. This Buchnera aphidicola subsp. Cinara cedri (strain Cc) protein is Large ribosomal subunit protein uL5.